Here is a 411-residue protein sequence, read N- to C-terminus: Glucose-1-phosphate adenylyltransferase (411 aa).

Alpha-D-glucose 1-phosphate-binding positions include G161, 176-177 (EK), and S195.

This sequence belongs to the bacterial/plant glucose-1-phosphate adenylyltransferase family. As to quaternary structure, homotetramer.

It catalyses the reaction alpha-D-glucose 1-phosphate + ATP + H(+) = ADP-alpha-D-glucose + diphosphate. It participates in glycan biosynthesis; glycogen biosynthesis. Its function is as follows. Involved in the biosynthesis of ADP-glucose, a building block required for the elongation reactions to produce glycogen. Catalyzes the reaction between ATP and alpha-D-glucose 1-phosphate (G1P) to produce pyrophosphate and ADP-Glc. In Anaeromyxobacter sp. (strain Fw109-5), this protein is Glucose-1-phosphate adenylyltransferase.